Here is a 462-residue protein sequence, read N- to C-terminus: MTDPSTNMRLKLPITCFILQIILIILFGVLVQYDEDTDAKKHHHGNHSESKSDIENDFYYRYPSFQDVHVMIFVGFGFLMTFLQRYGFSSVGFNFLIAAFSLQWATLMQGFFHGLHEGKIHIGVESMINADFCTGSVLISFGAVLGKTSPVQLLFMAVFEVTLFAVNEFILLTLLGTKDAGGSMTIHTFGAYFGLMVTRILYRPNLDKSKHKNCSVYHSDLFAMIGTLYLWMFWPSFNSAVTEHGDPQHRTAMNTYYSLAACTLSTYAMSSLTAHDGKLDMVHIQNAALAGGVAAGTAGEMMLTPFGSMIVGFLAGIISVLGFKYLTPILENKLKIQDTCGIHNLHGMPGVLGAIVGAVTASLASKEVYGEGLEKVFPDVASGKRTASDQGGVQAISLAVTLGMALFGGLIVGFILKLPIFGAPRDTTCFEDSLYWEVPGEEESHEDQLTTVKTEESDKLNS.

The Cytoplasmic segment spans residues 1–11 (MTDPSTNMRLK). Residues 12–32 (LPITCFILQIILIILFGVLVQ) form a helical membrane-spanning segment. Over 33–62 (YDEDTDAKKHHHGNHSESKSDIENDFYYRY) the chain is Extracellular. The N-linked (GlcNAc...) asparagine glycan is linked to asparagine 46. The helical transmembrane segment at 63–83 (PSFQDVHVMIFVGFGFLMTFL) threads the bilayer. Residues 84-94 (QRYGFSSVGFN) lie on the Cytoplasmic side of the membrane. The helical transmembrane segment at 95 to 115 (FLIAAFSLQWATLMQGFFHGL) threads the bilayer. Residues 116-125 (HEGKIHIGVE) lie on the Extracellular side of the membrane. A helical membrane pass occupies residues 126–146 (SMINADFCTGSVLISFGAVLG). The Cytoplasmic portion of the chain corresponds to 147–152 (KTSPVQ). Residues 153–173 (LLFMAVFEVTLFAVNEFILLT) traverse the membrane as a helical segment. The Extracellular portion of the chain corresponds to 174–180 (LLGTKDA). The chain crosses the membrane as a helical span at residues 181–201 (GGSMTIHTFGAYFGLMVTRIL). Over 202-220 (YRPNLDKSKHKNCSVYHSD) the chain is Cytoplasmic. The chain crosses the membrane as a helical span at residues 221-241 (LFAMIGTLYLWMFWPSFNSAV). Topologically, residues 242 to 302 (TEHGDPQHRT…VAAGTAGEMM (61 aa)) are extracellular. The helical transmembrane segment at 303–323 (LTPFGSMIVGFLAGIISVLGF) threads the bilayer. The Cytoplasmic segment spans residues 324–344 (KYLTPILENKLKIQDTCGIHN). Residues 345–365 (LHGMPGVLGAIVGAVTASLAS) form a helical membrane-spanning segment. Residues 366 to 395 (KEVYGEGLEKVFPDVASGKRTASDQGGVQA) are Extracellular-facing. The chain crosses the membrane as a helical span at residues 396 to 416 (ISLAVTLGMALFGGLIVGFIL). At 417 to 462 (KLPIFGAPRDTTCFEDSLYWEVPGEEESHEDQLTTVKTEESDKLNS) the chain is on the cytoplasmic side. Positions 441–462 (EEESHEDQLTTVKTEESDKLNS) are disordered. The segment covering 453–462 (KTEESDKLNS) has biased composition (basic and acidic residues).

Belongs to the ammonium transporter (TC 2.A.49) family. Rh subfamily.

The protein localises to the basolateral cell membrane. It is found in the cytoplasmic vesicle membrane. Functions as an ammonia transporter. May play a role in the elimination of ammonia in the gill. This is Ammonium transporter Rh type B (rhbg) from Oryzias latipes (Japanese rice fish).